The sequence spans 297 residues: tRNA(Ile)-lysidine synthase (297 aa).

S16–S21 serves as a coordination point for ATP.

This sequence belongs to the tRNA(Ile)-lysidine synthase family.

The protein resides in the cytoplasm. It carries out the reaction cytidine(34) in tRNA(Ile2) + L-lysine + ATP = lysidine(34) in tRNA(Ile2) + AMP + diphosphate + H(+). Ligates lysine onto the cytidine present at position 34 of the AUA codon-specific tRNA(Ile) that contains the anticodon CAU, in an ATP-dependent manner. Cytidine is converted to lysidine, thus changing the amino acid specificity of the tRNA from methionine to isoleucine. The polypeptide is tRNA(Ile)-lysidine synthase (Mesomycoplasma hyopneumoniae (strain 232) (Mycoplasma hyopneumoniae)).